Consider the following 147-residue polypeptide: Hemoglobin subunit epsilon-M (147 aa).

In terms of domain architecture, Globin spans histidine 3–histidine 147. A phosphoserine mark is found at serine 14 and serine 51. Heme b is bound by residues histidine 64 and histidine 93.

The protein belongs to the globin family. As to expression, red blood cells.

Hemoglobin epsilon chain is a beta-type chain found in early embryos. This chain is Hemoglobin subunit epsilon-M (HBE1), found in Didelphis virginiana (North American opossum).